Reading from the N-terminus, the 77-residue chain is Acyl carrier protein (77 aa).

A Carrier domain is found at 1–76 (MSLEDDVKAI…DVIKYIQEHQ (76 aa)). O-(pantetheine 4'-phosphoryl)serine is present on serine 36.

Belongs to the acyl carrier protein (ACP) family. Post-translationally, 4'-phosphopantetheine is transferred from CoA to a specific serine of apo-ACP by AcpS. This modification is essential for activity because fatty acids are bound in thioester linkage to the sulfhydryl of the prosthetic group.

The protein resides in the cytoplasm. The protein operates within lipid metabolism; fatty acid biosynthesis. Functionally, carrier of the growing fatty acid chain in fatty acid biosynthesis. The polypeptide is Acyl carrier protein (Chlamydia trachomatis serovar L2 (strain ATCC VR-902B / DSM 19102 / 434/Bu)).